The primary structure comprises 50 residues: Ampulexin 1 (50 aa).

The first 26 residues, 1–26 (MKAIMVLFYVMMLTIIASVSMVNGSP), serve as a signal peptide directing secretion.

As to quaternary structure, monomer. In terms of tissue distribution, expressed in venom sac and, to a lesser extent, in venom gland. Not expressed in brain.

It localises to the secreted. Its function is as follows. Amphipathic peptide which probably adopts an alpha-helical structure. When injected in subesophageal ganglia of cockroach P.americana, a natural host for larvae of A.compressa, dampens the escape response for about 1 hour which may contribute to early stages of hypokinesia. Has no antimicrobial activity against E.coli DH5alpha or B.thuringiensis. Is not cytotoxic in vitro. The sequence is that of Ampulexin 1 from Ampulex compressa (Emerald cockroach wasp).